The primary structure comprises 356 residues: MMLFFSSLSDWFPGVSVFRYITFRTVAAMLTSGLIVFLFGPSIIASLKLRQGKGQPIRADGPQTHFKKAGTPTMGGLMILTGIVVSAFLWCNLSNIYFWVSLFVMLSFGMIGFYDDYLKVTKQTEKGFSGKARLSLEFLIAIIAAFVLLQVGSSGLALPFVKDYFINLSWFFLPFSAFVIVGTGNAVNLTDGLDGLAIVPVMVAALSFALIAYLSGNINFADYLQIHYVSGTGELAVLLGAVVGAGLGFLWFNAPPAAIFMGDTGSLALGGLLGIVAVATKHEIVLALIGGLFVLEGFSVVIQVGYFKLKKKRVFLMAPIHHHFEKKGWTESQVVIRFWIISIVLALVGLSTLKLR.

The next 10 helical transmembrane spans lie at 25–45, 70–90, 93–113, 138–158, 164–184, 195–215, 235–255, 258–278, 284–304, and 333–353; these read TVAA…SIIA, GTPT…AFLW, LSNI…MIGF, FLIA…GLAL, YFIN…VGTG, GLAI…AYLS, LAVL…FNAP, AIFM…IVAV, IVLA…VIQV, and QVVI…LSTL.

It belongs to the glycosyltransferase 4 family. MraY subfamily. Mg(2+) serves as cofactor.

It is found in the cell inner membrane. The catalysed reaction is UDP-N-acetyl-alpha-D-muramoyl-L-alanyl-gamma-D-glutamyl-meso-2,6-diaminopimeloyl-D-alanyl-D-alanine + di-trans,octa-cis-undecaprenyl phosphate = di-trans,octa-cis-undecaprenyl diphospho-N-acetyl-alpha-D-muramoyl-L-alanyl-D-glutamyl-meso-2,6-diaminopimeloyl-D-alanyl-D-alanine + UMP. Its pathway is cell wall biogenesis; peptidoglycan biosynthesis. In terms of biological role, catalyzes the initial step of the lipid cycle reactions in the biosynthesis of the cell wall peptidoglycan: transfers peptidoglycan precursor phospho-MurNAc-pentapeptide from UDP-MurNAc-pentapeptide onto the lipid carrier undecaprenyl phosphate, yielding undecaprenyl-pyrophosphoryl-MurNAc-pentapeptide, known as lipid I. The chain is Phospho-N-acetylmuramoyl-pentapeptide-transferase from Bartonella quintana (strain Toulouse) (Rochalimaea quintana).